Here is a 302-residue protein sequence, read N- to C-terminus: HPr kinase/phosphorylase (302 aa).

Active-site residues include histidine 136 and lysine 157. Position 151-158 (151-158 (GESGIGKS)) interacts with ATP. Residue serine 158 coordinates Mg(2+). Aspartate 175 (proton acceptor; for phosphorylation activity. Proton donor; for dephosphorylation activity) is an active-site residue. The interval 198–207 (LEVRGLGIID) is important for the catalytic mechanism of both phosphorylation and dephosphorylation. Glutamate 199 contacts Mg(2+). Arginine 240 is an active-site residue. The interval 261–266 (PIRPGR) is important for the catalytic mechanism of dephosphorylation.

The protein belongs to the HPrK/P family. As to quaternary structure, homohexamer. It depends on Mg(2+) as a cofactor.

It carries out the reaction [HPr protein]-L-serine + ATP = [HPr protein]-O-phospho-L-serine + ADP + H(+). The enzyme catalyses [HPr protein]-O-phospho-L-serine + phosphate + H(+) = [HPr protein]-L-serine + diphosphate. Its function is as follows. Catalyzes the ATP- as well as the pyrophosphate-dependent phosphorylation of a specific serine residue in HPr, a phosphocarrier protein of the phosphoenolpyruvate-dependent sugar phosphotransferase system (PTS). HprK/P also catalyzes the pyrophosphate-producing, inorganic phosphate-dependent dephosphorylation (phosphorolysis) of seryl-phosphorylated HPr (P-Ser-HPr). The two antagonistic activities of HprK/P are regulated by several intracellular metabolites, which change their concentration in response to the absence or presence of rapidly metabolisable carbon sources (glucose, fructose, etc.) in the growth medium. Therefore, by controlling the phosphorylation state of HPr, HPrK/P is a sensor enzyme that plays a major role in the regulation of carbon metabolism and sugar transport: it mediates carbon catabolite repression (CCR), and regulates PTS-catalyzed carbohydrate uptake and inducer exclusion. The chain is HPr kinase/phosphorylase from Clostridium beijerinckii (strain ATCC 51743 / NCIMB 8052) (Clostridium acetobutylicum).